The sequence spans 428 residues: Tryptophan synthase beta chain (428 aa).

Lys-100 is modified (N6-(pyridoxal phosphate)lysine).

Belongs to the TrpB family. Tetramer of two alpha and two beta chains. Pyridoxal 5'-phosphate serves as cofactor.

It catalyses the reaction (1S,2R)-1-C-(indol-3-yl)glycerol 3-phosphate + L-serine = D-glyceraldehyde 3-phosphate + L-tryptophan + H2O. The protein operates within amino-acid biosynthesis; L-tryptophan biosynthesis; L-tryptophan from chorismate: step 5/5. In terms of biological role, the beta subunit is responsible for the synthesis of L-tryptophan from indole and L-serine. In Streptomyces griseus subsp. griseus (strain JCM 4626 / CBS 651.72 / NBRC 13350 / KCC S-0626 / ISP 5235), this protein is Tryptophan synthase beta chain.